Reading from the N-terminus, the 136-residue chain is Large ribosomal subunit protein uL16 (136 aa).

Belongs to the universal ribosomal protein uL16 family. As to quaternary structure, part of the 50S ribosomal subunit.

Its function is as follows. Binds 23S rRNA and is also seen to make contacts with the A and possibly P site tRNAs. This Yersinia enterocolitica serotype O:8 / biotype 1B (strain NCTC 13174 / 8081) protein is Large ribosomal subunit protein uL16.